Here is a 259-residue protein sequence, read N- to C-terminus: TLC domain-containing protein 4 (259 aa).

Helical transmembrane passes span 6–26 (FISY…FSII), 53–73 (CVST…LAYD), 86–106 (FWVK…LLLL), 117–133 (YMVC…GYVL), 172–192 (PVLL…IAVI), and 213–233 (IGPQ…NVFW). The TLC domain occupies 44–246 (GKQCEWDSRC…IARGFYKVVK (203 aa)).

Belongs to the TLCD4 family.

It is found in the membrane. The chain is TLC domain-containing protein 4 (tlcd4) from Xenopus tropicalis (Western clawed frog).